A 296-amino-acid chain; its full sequence is Remorin 4.1 (296 aa).

3 disordered regions span residues 1 to 78, 121 to 142, and 242 to 266; these read MLTL…SGEN, TRIGENDDVGDHGQVPEEDSNP, and EKTQNKVAKAQRKAEERRATAEGKR. Residues 21–39 are compositionally biased toward basic and acidic residues; that stretch reads ASDRRDETPSSEIVVRDIH. Polar residues-rich tracts occupy residues 41–53 and 62–78; these read MTTTTELTRPQQR and PSRSIAFSDGTTSSGEN. Composition is skewed to basic and acidic residues over residues 121-135 and 253-266; these read TRIGENDDVGDHGQV and RKAEERRATAEGKR. A coiled-coil region spans residues 226 to 261; sequence MKKIERKLEDRRAKAMEKTQNKVAKAQRKAEERRAT.

This sequence belongs to the remorin family. As to quaternary structure, forms homodimer and heterodimer with REM4.2. Interacts with KIN11. In terms of processing, phosphorylated by KIN11. Post-translationally, probably ubiquitinated and degraded by the 26S proteasome pathway. Predominantly detected in bud, stem, root, flower, silique, and leaves, and enhanced dramatically in senescence leaf.

It localises to the cell membrane. Its function is as follows. Collaborates with REM4.2 to positively regulate the BCTV and BSCTV susceptibility. This is Remorin 4.1 from Arabidopsis thaliana (Mouse-ear cress).